A 248-amino-acid chain; its full sequence is mRNA-decapping protein OPG122 (248 aa).

Residues 45 to 227 (HKRVSVSAIL…IAKYALDTAK (183 aa)) form the Nudix hydrolase domain. A Nudix box motif is present at residues 126–147 (GIPKRGENVPECLSREIKEEVN). Glu132 provides a ligand contact to Mg(2+). The Nucleophile role is filled by Glu141. Residue Glu145 coordinates Mn(2+). Position 167 (Asp167) interacts with Mg(2+).

The protein belongs to the Nudix hydrolase family. Mg(2+) serves as cofactor. Requires Mn(2+) as cofactor.

The protein localises to the host mitochondrion. Its function is as follows. Decapping enzyme that remove the protective 5'-cap from both host and viral mRNAs to commit transcripts for decay by the cellular exonuclease XRN1. Preferentially targets spliced mRNAs and since all viral genes are intronless, it preferentially targets host over viral transcripts. Acceleration of the turnover of cellular transcripts promotes the shutoff of host protein synthesis and therefore diminish the magnitude of antiviral response. This Vaccinia virus (strain Copenhagen) (VACV) protein is mRNA-decapping protein OPG122 (OPG122).